A 262-amino-acid chain; its full sequence is Phosphatidylglycerol--prolipoprotein diacylglyceryl transferase (262 aa).

A run of 4 helical transmembrane segments spans residues 17-37 (FAIHWYGLMYLMAFVQFLLLG), 59-79 (LLFAGVLGVVLGGRLGYTLFY), 94-114 (IWEGGMSFHGGLLGVLAALYW), and 121-141 (TTFFVVSDLVAPLVPFGLAFG). An a 1,2-diacyl-sn-glycero-3-phospho-(1'-sn-glycerol)-binding site is contributed by R142. The next 3 membrane-spanning stretches (helical) occupy residues 176-196 (QIYQLLGEGVLLGIALWFYAG), 201-221 (VGQVSGFFLLGYGICRFLAEY), and 231-251 (LLGLGLSMGQWLCVPMIFFGI).

It belongs to the Lgt family.

The protein resides in the cell inner membrane. It catalyses the reaction L-cysteinyl-[prolipoprotein] + a 1,2-diacyl-sn-glycero-3-phospho-(1'-sn-glycerol) = an S-1,2-diacyl-sn-glyceryl-L-cysteinyl-[prolipoprotein] + sn-glycerol 1-phosphate + H(+). The protein operates within protein modification; lipoprotein biosynthesis (diacylglyceryl transfer). In terms of biological role, catalyzes the transfer of the diacylglyceryl group from phosphatidylglycerol to the sulfhydryl group of the N-terminal cysteine of a prolipoprotein, the first step in the formation of mature lipoproteins. The sequence is that of Phosphatidylglycerol--prolipoprotein diacylglyceryl transferase from Polynucleobacter necessarius subsp. necessarius (strain STIR1).